A 181-amino-acid chain; its full sequence is Large ribosomal subunit protein uL10 (181 aa).

This sequence belongs to the universal ribosomal protein uL10 family. As to quaternary structure, part of the ribosomal stalk of the 50S ribosomal subunit. The N-terminus interacts with L11 and the large rRNA to form the base of the stalk. The C-terminus forms an elongated spine to which L12 dimers bind in a sequential fashion forming a multimeric L10(L12)X complex.

In terms of biological role, forms part of the ribosomal stalk, playing a central role in the interaction of the ribosome with GTP-bound translation factors. The chain is Large ribosomal subunit protein uL10 from Bradyrhizobium diazoefficiens (strain JCM 10833 / BCRC 13528 / IAM 13628 / NBRC 14792 / USDA 110).